Here is a 194-residue protein sequence, read N- to C-terminus: Large ribosomal subunit protein bL25 (194 aa).

Belongs to the bacterial ribosomal protein bL25 family. CTC subfamily. Part of the 50S ribosomal subunit; part of the 5S rRNA/L5/L18/L25 subcomplex. Contacts the 5S rRNA. Binds to the 5S rRNA independently of L5 and L18.

This is one of the proteins that binds to the 5S RNA in the ribosome where it forms part of the central protuberance. The polypeptide is Large ribosomal subunit protein bL25 (Thermobifida fusca (strain YX)).